Reading from the N-terminus, the 88-residue chain is MINEVCADAALGRHEARRDRELRTLQSQLYEVCRRSGVADSFCSSLMMSPVGVGGATSKPYFKGGVEEDRVQSSLRRNDVLVVPARVP.

This is an uncharacterized protein from Lymantria dispar multicapsid nuclear polyhedrosis virus (LdMNPV).